Reading from the N-terminus, the 670-residue chain is Probable urocanate hydratase (670 aa).

Residues 126 to 127, Q204, 250 to 252, E270, 316 to 317, 338 to 342, 349 to 350, Y398, and G590 contribute to the NAD(+) site; these read GG, GMS, NV, QTSLH, and FY.

The protein belongs to the urocanase family. It depends on NAD(+) as a cofactor.

The catalysed reaction is 4-imidazolone-5-propanoate = trans-urocanate + H2O. Its pathway is amino-acid degradation; L-histidine degradation into L-glutamate; N-formimidoyl-L-glutamate from L-histidine: step 2/3. In Caenorhabditis elegans, this protein is Probable urocanate hydratase.